Here is a 179-residue protein sequence, read N- to C-terminus: uncharacterized protein (179 aa).

Over residues 1–10 the composition is skewed to polar residues; it reads ATLSAGQPAS. Disordered regions lie at residues 1–35, 59–80, and 131–179; these read ATLS…RGKC, VRRN…PIVT, and ECPT…STCR. Over residues 23–33 the composition is skewed to basic residues; it reads LHRHPAPKRRG. Over residues 149-158 the composition is skewed to basic residues; the sequence is TPSRVRRSRR.

This is an uncharacterized protein from Human cytomegalovirus (strain AD169) (HHV-5).